Here is a 198-residue protein sequence, read N- to C-terminus: MSFLKKSLLLILFLGLVSLSVCKEEKRVSEEENENEENHEEGSEMKRYAFGYPSGEAKKIKRESEEEKEIEENHEEGSEMKRYAFGYPSGEAKKIKRESEEENENEENHEEGSEMKRYAFGYPSGEAKKIKRESEEEKEIEENHEEGSEMKRYAFGYPSGEAKKIKRESEEENENEENHEEGSEMKRYAFGYPSGEAK.

A signal peptide spans 1-20 (MSFLKKSLLLILFLGLVSLS). Residues 21 to 45 (VCKEEKRVSEEENENEENHEEGSEM) constitute a propeptide that is removed on maturation. The disordered stretch occupies residues 24-198 (EEKRVSEEEN…AFGYPSGEAK (175 aa)). D-alanine (Ala) is present on Ala-49. A Serine amide modification is found at Ser-54. Over residues 56–65 (EAKKIKRESE) the composition is skewed to basic and acidic residues. The propeptide occupies 56–80 (EAKKIKRESEEEKEIEENHEEGSEM). At Ala-84 the chain carries D-alanine (Ala). The residue at position 89 (Ser-89) is a Serine amide. The propeptide occupies 91-115 (EAKKIKRESEEENENEENHEEGSEM). Positions 100-109 (EEENENEENH) are enriched in acidic residues. At Ala-119 the chain carries D-alanine (Ala). Serine amide is present on Ser-124. A compositionally biased stretch (basic and acidic residues) spans 126 to 135 (EAKKIKRESE). Residues 126-150 (EAKKIKRESEEEKEIEENHEEGSEM) constitute a propeptide that is removed on maturation. The residue at position 154 (Ala-154) is a D-alanine (Ala). Ser-159 carries the post-translational modification Serine amide. Residues 161–185 (EAKKIKRESEEENENEENHEEGSEM) constitute a propeptide that is removed on maturation. The segment covering 170-179 (EEENENEENH) has biased composition (acidic residues). Ala-189 bears the D-alanine (Ala) mark. Ser-194 carries the serine amide modification. The propeptide occupies 196–198 (EAK).

The protein belongs to the frog skin active peptide (FSAP) family. Dermorphin subfamily. Expressed by the skin glands.

Its subcellular location is the secreted. Dermorphin has a very potent opiate-like activity. It has high affinity and selectivity for mu-type opioid receptors. The polypeptide is Dermorphin-2 (Phyllomedusa sauvagei (Sauvage's leaf frog)).